The sequence spans 118 residues: uncharacterized protein (118 aa).

4 consecutive transmembrane segments (helical) span residues isoleucine 12 to phenylalanine 32, leucine 39 to isoleucine 59, isoleucine 63 to isoleucine 83, and serine 98 to phenylalanine 118.

It is found in the cell membrane. This is an uncharacterized protein from Methanocaldococcus jannaschii (strain ATCC 43067 / DSM 2661 / JAL-1 / JCM 10045 / NBRC 100440) (Methanococcus jannaschii).